A 727-amino-acid polypeptide reads, in one-letter code: Glycerol-3-phosphate dehydrogenase, mitochondrial (727 aa).

The transit peptide at Met-1–Ala-42 directs the protein to the mitochondrion. Asp-71–Glu-99 is a binding site for FAD. Tyr-601 is subject to Phosphotyrosine. 2 consecutive EF-hand domains span residues Ser-623–Gln-658 and Met-659–Gly-694. Ca(2+)-binding residues include Asp-672, Asn-674, Asn-676, Gln-678, and Glu-683.

It belongs to the FAD-dependent glycerol-3-phosphate dehydrogenase family. FAD serves as cofactor.

The protein resides in the mitochondrion. It carries out the reaction a quinone + sn-glycerol 3-phosphate = dihydroxyacetone phosphate + a quinol. It functions in the pathway polyol metabolism; glycerol degradation via glycerol kinase pathway; glycerone phosphate from sn-glycerol 3-phosphate (aerobic route): step 1/1. Calcium-binding enhance the activity of the enzyme. In terms of biological role, calcium-responsive mitochondrial glycerol-3-phosphate dehydrogenase which seems to be a key component of the pancreatic beta-cell glucose-sensing device. The chain is Glycerol-3-phosphate dehydrogenase, mitochondrial (GPD2) from Macaca fascicularis (Crab-eating macaque).